The primary structure comprises 172 residues: Phosphopantetheine adenylyltransferase (172 aa).

S9 contributes to the substrate binding site. Residues 9–10 (SF) and H17 each bind ATP. Positions 41, 78, and 92 each coordinate substrate. ATP contacts are provided by residues 93-95 (GLR), E103, and 128-134 (GRAITST).

This sequence belongs to the bacterial CoaD family. Homohexamer. It depends on Mg(2+) as a cofactor.

The protein localises to the cytoplasm. The enzyme catalyses (R)-4'-phosphopantetheine + ATP + H(+) = 3'-dephospho-CoA + diphosphate. It functions in the pathway cofactor biosynthesis; coenzyme A biosynthesis; CoA from (R)-pantothenate: step 4/5. In terms of biological role, reversibly transfers an adenylyl group from ATP to 4'-phosphopantetheine, yielding dephospho-CoA (dPCoA) and pyrophosphate. This Bartonella quintana (strain Toulouse) (Rochalimaea quintana) protein is Phosphopantetheine adenylyltransferase.